Here is a 572-residue protein sequence, read N- to C-terminus: Hemolysin-1 (572 aa).

Functionally, bacterial hemolysins are exotoxins that attack blood cell membranes and cause cell rupture by mechanisms not clearly defined. The protein is Hemolysin-1 (ash1) of Aeromonas salmonicida.